The primary structure comprises 263 residues: N-acyl homoserine lactonase AttM (263 aa).

His103, His105, Asp107, His108, His180, Asp202, and His247 together coordinate Zn(2+).

The protein belongs to the metallo-beta-lactamase superfamily. Requires Zn(2+) as cofactor.

The enzyme catalyses an N-acyl-L-homoserine lactone + H2O = an N-acyl-L-homoserine + H(+). This Rhizobium radiobacter (Agrobacterium tumefaciens) protein is N-acyl homoserine lactonase AttM (attM).